The following is a 117-amino-acid chain: Large ribosomal subunit protein bL20 (117 aa).

The protein belongs to the bacterial ribosomal protein bL20 family.

In terms of biological role, binds directly to 23S ribosomal RNA and is necessary for the in vitro assembly process of the 50S ribosomal subunit. It is not involved in the protein synthesizing functions of that subunit. This Vibrio metschnikovii protein is Large ribosomal subunit protein bL20.